The chain runs to 155 residues: 6,7-dimethyl-8-ribityllumazine synthase (155 aa).

Residues Phe23, 57-59 (AFE), and 81-83 (AVI) contribute to the 5-amino-6-(D-ribitylamino)uracil site. 86–87 (ST) lines the (2S)-2-hydroxy-3-oxobutyl phosphate pocket. His89 functions as the Proton donor in the catalytic mechanism. Phe114 contributes to the 5-amino-6-(D-ribitylamino)uracil binding site. Arg128 is a binding site for (2S)-2-hydroxy-3-oxobutyl phosphate.

Belongs to the DMRL synthase family.

The enzyme catalyses (2S)-2-hydroxy-3-oxobutyl phosphate + 5-amino-6-(D-ribitylamino)uracil = 6,7-dimethyl-8-(1-D-ribityl)lumazine + phosphate + 2 H2O + H(+). It functions in the pathway cofactor biosynthesis; riboflavin biosynthesis; riboflavin from 2-hydroxy-3-oxobutyl phosphate and 5-amino-6-(D-ribitylamino)uracil: step 1/2. Its function is as follows. Catalyzes the formation of 6,7-dimethyl-8-ribityllumazine by condensation of 5-amino-6-(D-ribitylamino)uracil with 3,4-dihydroxy-2-butanone 4-phosphate. This is the penultimate step in the biosynthesis of riboflavin. This is 6,7-dimethyl-8-ribityllumazine synthase from Geobacter sulfurreducens (strain ATCC 51573 / DSM 12127 / PCA).